A 57-amino-acid polypeptide reads, in one-letter code: Protein translocase subunit SecE (57 aa).

Residues 33–53 (GAGIFLVGLLGFIIFAVMSFL) form a helical membrane-spanning segment.

This sequence belongs to the SecE/SEC61-gamma family. In terms of assembly, component of the Sec protein translocase complex. Heterotrimer consisting of SecY (alpha), SecG (beta) and SecE (gamma) subunits. The heterotrimers can form oligomers, although 1 heterotrimer is thought to be able to translocate proteins. Interacts with the ribosome. May interact with SecDF, and other proteins may be involved.

It localises to the cell membrane. Functionally, essential subunit of the Sec protein translocation channel SecYEG. Clamps together the 2 halves of SecY. May contact the channel plug during translocation. This chain is Protein translocase subunit SecE, found in Haloferax mediterranei (strain ATCC 33500 / DSM 1411 / JCM 8866 / NBRC 14739 / NCIMB 2177 / R-4) (Halobacterium mediterranei).